The sequence spans 451 residues: Phosphoglucosamine mutase (451 aa).

Catalysis depends on Ser-102, which acts as the Phosphoserine intermediate. Residues Ser-102, Asp-242, Asp-244, and Asp-246 each contribute to the Mg(2+) site. Ser-102 carries the phosphoserine modification.

This sequence belongs to the phosphohexose mutase family. The cofactor is Mg(2+). In terms of processing, activated by phosphorylation.

The catalysed reaction is alpha-D-glucosamine 1-phosphate = D-glucosamine 6-phosphate. Catalyzes the conversion of glucosamine-6-phosphate to glucosamine-1-phosphate. In Staphylococcus carnosus (strain TM300), this protein is Phosphoglucosamine mutase.